The primary structure comprises 186 residues: Ribosome-recycling factor (186 aa).

The protein belongs to the RRF family.

Its subcellular location is the cytoplasm. In terms of biological role, responsible for the release of ribosomes from messenger RNA at the termination of protein biosynthesis. May increase the efficiency of translation by recycling ribosomes from one round of translation to another. The polypeptide is Ribosome-recycling factor (Burkholderia mallei (strain NCTC 10247)).